Reading from the N-terminus, the 601-residue chain is 3-hydroxy-3-methylglutaryl-coenzyme A reductase (601 aa).

Residues M1–P34 are disordered. 2 helical membrane-spanning segments follow: residues S36–V58 and A86–V106. Residues Q107–E179 form a linker region. A catalytic region spans residues D180–S601. E273 (charge relay system) is an active-site residue. N337 carries N-linked (GlcNAc...) asparagine glycosylation. Catalysis depends on charge relay system residues K405 and D481. H579 functions as the Proton donor in the catalytic mechanism. A glycan (N-linked (GlcNAc...) asparagine) is linked at N583.

Belongs to the HMG-CoA reductase family.

The protein localises to the endoplasmic reticulum membrane. It carries out the reaction (R)-mevalonate + 2 NADP(+) + CoA = (3S)-3-hydroxy-3-methylglutaryl-CoA + 2 NADPH + 2 H(+). It participates in metabolic intermediate biosynthesis; (R)-mevalonate biosynthesis; (R)-mevalonate from acetyl-CoA: step 3/3. In terms of biological role, catalyzes the synthesis of mevalonate. The specific precursor of all isoprenoid compounds present in plants. This Catharanthus roseus (Madagascar periwinkle) protein is 3-hydroxy-3-methylglutaryl-coenzyme A reductase (HMGR).